A 90-amino-acid polypeptide reads, in one-letter code: Probable Fe(2+)-trafficking protein (90 aa).

This sequence belongs to the Fe(2+)-trafficking protein family.

Its function is as follows. Could be a mediator in iron transactions between iron acquisition and iron-requiring processes, such as synthesis and/or repair of Fe-S clusters in biosynthetic enzymes. In Dechloromonas aromatica (strain RCB), this protein is Probable Fe(2+)-trafficking protein.